The sequence spans 90 residues: Probable oxaloacetate decarboxylase gamma chain 2 (90 aa).

The helical transmembrane segment at 10-32 (GINLLTLGMGFVFIFLIFLVYAT) threads the bilayer.

Belongs to the OadG family. In terms of assembly, heterotrimer of an alpha, a beta and a gamma subunit. Na(+) serves as cofactor.

The protein localises to the cell membrane. The catalysed reaction is oxaloacetate + 2 Na(+)(in) + H(+) = pyruvate + 2 Na(+)(out) + CO2. In terms of biological role, catalyzes the decarboxylation of oxaloacetate coupled to Na(+) translocation. This Vibrio cholerae serotype O1 (strain ATCC 39315 / El Tor Inaba N16961) protein is Probable oxaloacetate decarboxylase gamma chain 2 (oadG2).